A 200-amino-acid chain; its full sequence is GTP cyclohydrolase-2 (200 aa).

Residue Arg49 to Glu53 participates in GTP binding. Cys54, Cys65, and Cys67 together coordinate Zn(2+). GTP contacts are provided by residues Gln70, Glu92–Arg94, and Thr114. Catalysis depends on Asp126, which acts as the Proton acceptor. The active-site Nucleophile is Arg128. GTP contacts are provided by Thr149 and Lys154.

Belongs to the GTP cyclohydrolase II family. In terms of assembly, homodimer. Zn(2+) is required as a cofactor.

The enzyme catalyses GTP + 4 H2O = 2,5-diamino-6-hydroxy-4-(5-phosphoribosylamino)-pyrimidine + formate + 2 phosphate + 3 H(+). Its pathway is cofactor biosynthesis; riboflavin biosynthesis; 5-amino-6-(D-ribitylamino)uracil from GTP: step 1/4. In terms of biological role, catalyzes the conversion of GTP to 2,5-diamino-6-ribosylamino-4(3H)-pyrimidinone 5'-phosphate (DARP), formate and pyrophosphate. In Klebsiella pneumoniae subsp. pneumoniae (strain ATCC 700721 / MGH 78578), this protein is GTP cyclohydrolase-2.